Here is a 158-residue protein sequence, read N- to C-terminus: NAD(P)H-quinone oxidoreductase subunit J, chloroplastic (158 aa).

It belongs to the complex I 30 kDa subunit family. As to quaternary structure, NDH is composed of at least 16 different subunits, 5 of which are encoded in the nucleus.

It is found in the plastid. The protein localises to the chloroplast thylakoid membrane. The catalysed reaction is a plastoquinone + NADH + (n+1) H(+)(in) = a plastoquinol + NAD(+) + n H(+)(out). It catalyses the reaction a plastoquinone + NADPH + (n+1) H(+)(in) = a plastoquinol + NADP(+) + n H(+)(out). NDH shuttles electrons from NAD(P)H:plastoquinone, via FMN and iron-sulfur (Fe-S) centers, to quinones in the photosynthetic chain and possibly in a chloroplast respiratory chain. The immediate electron acceptor for the enzyme in this species is believed to be plastoquinone. Couples the redox reaction to proton translocation, and thus conserves the redox energy in a proton gradient. This chain is NAD(P)H-quinone oxidoreductase subunit J, chloroplastic, found in Acorus calamus var. americanus (American sweet flag).